The following is a 236-amino-acid chain: uncharacterized protein (236 aa).

The GP-PDE domain occupies 4 to 236 (QFLIAYRGYS…VKFQITAQIY (233 aa)).

The protein to glycerophosphoryl diester phosphodiesterases (EC 3.1.4.46). To M.genitalium MG293.

This is an uncharacterized protein from Mycoplasma genitalium (strain ATCC 33530 / DSM 19775 / NCTC 10195 / G37) (Mycoplasmoides genitalium).